The chain runs to 122 residues: Aspartate 1-decarboxylase (122 aa).

Ser-25 (schiff-base intermediate with substrate; via pyruvic acid) is an active-site residue. Ser-25 carries the pyruvic acid (Ser) modification. Thr-57 contacts substrate. Tyr-58 (proton donor) is an active-site residue. 73–75 contacts substrate; that stretch reads GAA.

Belongs to the PanD family. Heterooctamer of four alpha and four beta subunits. The cofactor is pyruvate. Post-translationally, is synthesized initially as an inactive proenzyme, which is activated by self-cleavage at a specific serine bond to produce a beta-subunit with a hydroxyl group at its C-terminus and an alpha-subunit with a pyruvoyl group at its N-terminus.

It localises to the cytoplasm. The enzyme catalyses L-aspartate + H(+) = beta-alanine + CO2. Its pathway is cofactor biosynthesis; (R)-pantothenate biosynthesis; beta-alanine from L-aspartate: step 1/1. In terms of biological role, catalyzes the pyruvoyl-dependent decarboxylation of aspartate to produce beta-alanine. The sequence is that of Aspartate 1-decarboxylase from Bordetella avium (strain 197N).